Here is a 196-residue protein sequence, read N- to C-terminus: Calmodulin-like protein 4 (196 aa).

The disordered stretch occupies residues 1 to 43 (MAAEHLLPGPPPSLADFRLEAGGKGTERGSGSSKPTGSSRGPR). Residues 17–27 (FRLEAGGKGTE) show a composition bias toward basic and acidic residues. Polar residues predominate over residues 29–39 (GSGSSKPTGSS). EF-hand domains are found at residues 51 to 86 (DQIN…LGAS), 87 to 122 (PTPG…QIKQ), 124 to 159 (DPKK…LGEK), and 160 to 195 (LTHK…PGRD).

This sequence belongs to the calmodulin family. As to quaternary structure, interacts with MYO7B; the interaction mediates the association of CALML4 with the IMAC/intermicrovillar adhesion complex. Interacts with MYO7A. Expressed in the intestinal tract. As to expression, dominant transcript in the intestinal tract.

It is found in the cell projection. It localises to the microvillus. Functionally, as part of the intermicrovillar adhesion complex/IMAC plays a role in epithelial brush border differentiation, controlling microvilli organization and length. Acts as a light chain for MYO7B and is required for efficient targeting of the IMAC to the tips of border brush microvilli. In Homo sapiens (Human), this protein is Calmodulin-like protein 4.